The primary structure comprises 343 residues: 2-alkenal reductase (NADP(+)-dependent) (343 aa).

Residues Tyr55 and Tyr80 each coordinate substrate. NADP(+)-binding positions include 165–166, Gly186, Lys190, Tyr206, Asn230, Cys252, Tyr258, 282–284, and Asn332; these read AV and FLV.

This sequence belongs to the NADP-dependent oxidoreductase L4BD family. Homodimer.

The enzyme catalyses an n-alkanal + NADP(+) = an alk-2-enal + NADPH + H(+). In terms of biological role, reduces the C=C double bonds of alpha, beta unsaturated enones, but has no activity on enones with an endocyclic C=C double-bond. Shows a high specificity for NADPH as the hybrid donor. Substrates are 1-nitrocyclohexene, 2-methylpentenal, trans-cinnamaldehyde, methyl-trans-2-methylcinnamaldehyde, trans-2-nonenal and 1-octen-3-one. Reduced activity with aplha-methyl transcinnamaldehyde, 1-cyclohexene-1-carboxaldehyde, methyl crotonate, (R)-pulegone, and dimethyl itaconate and no activity with maleimides, citral, (5R)- or (5S)-carvone, (S)-perillyl alcohol, and substituted cyclohexenones and cyclopentenones. May also act as a allyl-alcohol dehydrogenase by catalyzing the dehydrogenation of secondary allylic alcohols rather than saturated secondary alcohols. Allyl-alcohol dehydrogenase is specific for the S-stereoisomer of the alcohols. The protein is 2-alkenal reductase (NADP(+)-dependent) (DBR) of Nicotiana tabacum (Common tobacco).